The chain runs to 585 residues: BURP domain-containing protein 17 (585 aa).

An N-terminal signal peptide occupies residues 1–20; sequence MDRIFARFFCFLLIAAVSHA. Residues 63-82 form a disordered region; it reads GQRNYKSSVSHVAERSHRVD. A BURP domain is found at 363–584; it reads FFLEKNLQQG…QPDAVVWTRR (222 aa).

As to expression, expressed in leaves.

The chain is BURP domain-containing protein 17 (BURP17) from Oryza sativa subsp. japonica (Rice).